The chain runs to 156 residues: Small ribosomal subunit protein uS7c (156 aa).

The protein belongs to the universal ribosomal protein uS7 family. Part of the 30S ribosomal subunit.

It is found in the plastid. It localises to the chloroplast. In terms of biological role, one of the primary rRNA binding proteins, it binds directly to 16S rRNA where it nucleates assembly of the head domain of the 30S subunit. The protein is Small ribosomal subunit protein uS7c (rps7) of Rhodomonas salina (Cryptomonas salina).